Here is a 113-residue protein sequence, read N- to C-terminus: MYMIVVKYLYALCSSFFDCILNFNETVFGPSHRAFNPNNIIFIVDFQNFNILDSNMLVSHMTRHLSSWQYPTWVLVLTIRTTVSMHNRCTMRCSQTLESIPFHHTSKTFAFAD.

Its subcellular location is the cytoplasm. It is found in the nucleus. This is an uncharacterized protein from Saccharomyces cerevisiae (strain ATCC 204508 / S288c) (Baker's yeast).